A 257-amino-acid chain; its full sequence is UPF0246 protein YaaA (257 aa).

The protein belongs to the UPF0246 family.

This is UPF0246 protein YaaA from Salmonella schwarzengrund (strain CVM19633).